Consider the following 409-residue polypeptide: Failed axon connections homolog (409 aa).

The chain crosses the membrane as a helical span at residues 68 to 88 (YLTGGALLAAAAYLLHELLVI). The disordered stretch occupies residues 372 to 409 (DEGAENSFSRTPDTDFTGHSLFDSDVDMDDYTDHEQCK).

The protein belongs to the FAX family.

It is found in the membrane. Functionally, may play a role in axonal development. The chain is Failed axon connections homolog (FAXC) from Homo sapiens (Human).